We begin with the raw amino-acid sequence, 359 residues long: Protein PAM71-homolog, chloroplastic (359 aa).

The N-terminal 66 residues, 1 to 66, are a transit peptide targeting the chloroplast; that stretch reads MKLTSLSKNA…DLLWGKFRVR (66 aa). The disordered stretch occupies residues 71 to 102; the sequence is GVGSGSYSGGEEDGSQSSSLDQSPATSSESLK. A compositionally biased stretch (low complexity) spans 85–98; sequence SQSSSLDQSPATSS. 7 consecutive transmembrane segments (helical) span residues 110–130, 149–169, 177–197, 207–227, 269–289, 311–331, and 339–359; these read SLSIALVLLSCGLVFSLITFV, AFSLIFVSEIGDKTFFIAALL, LVLLGSMGALSLMTILSVVIG, FQTTLPIGEYAAIALLMFFGL, LTNPLEILWKSFSLVFFAEWG, GAIAGHLVATVLAIMGGAFLA, and VGYVGGALFLVFAAATFFGVF.

It belongs to the GDT1 family.

It localises to the plastid. Its subcellular location is the chloroplast membrane. Its function is as follows. Probable chloroplast-localized Mn(2+)/H(+) and/or Ca(2+)/H(+) antiporter regulating Ca(2+), Mn(2+) and pH homeostasis. The chain is Protein PAM71-homolog, chloroplastic from Arabidopsis thaliana (Mouse-ear cress).